Consider the following 108-residue polypeptide: Circadian clock oscillator protein KaiB (108 aa).

It belongs to the KaiB family. Undergoes a major conformational rearrangment; in the free state forms homotetramers with 2 dimers. When bound to the CI domain of KaiC, KaiA or CikA switches to a monomeric thioredoxin-fold (KaiB(fs)). The KaiABC complex composition changes during the circadian cycle to control KaiC phosphorylation. Complexes KaiC(6), KaiA(2-4):KaiC(6), KaiB(6):KaiC(6) and KaiC(6):KaiB(6):KaiA(12) are among the most important forms, many form cooperatively. Binds to KaiA; 1 KaiB(fs) binds to the KaiA homodimer. Binds to the B-loop in the CI domain of KaiC; SasA and KaiB compete to bind to the CI domain. Binding to KaiC CI domain occurs 1:1. KaiA and CikA bind to the same region of KaiB(fs) and therefore compete.

Key component of the KaiABC oscillator complex, which constitutes the main circadian regulator in cyanobacteria. Its composition changes during the circadian cycle to control KaiC phosphorylation. KaiA stimulates KaiC autophosphorylation, while KaiB sequesters KaiA, leading to KaiC autodephosphorylation. KaiA binding to KaiC yields KaiA(2-4):KaiC(6) complexes which stimulate KaiC autophosphorylation. Phospho-Ser-431 KaiC accumulation triggers binding of KaiB to form the KaiB(6):KaiC(6) complex, leading to changes in the output regulators CikA and SasA. KaiB switches to a thioredoxin-like fold (KaiB(fs)) in complex with KaiC. KaiB(6):KaiC(6) formation exposes a site for KaiA binding that sequesters KaiA from the CII domain, making the KaiC(6):KaiB(6):KaiA(12) complex that results in KaiC autodephosphorylation. Complete dephosphorylation of KaiC leads to dissociation of KaiA(2):KaiB(1), completing 1 cycle of the Kai oscillator. Functionally, a metamorphic protein which reversibly switches between an inactive tetrameric fold and a rare, thioredoxin-like monomeric fold (KaiB(fs)). KaiB(fs) binds phospho-KaiC, KaiA and CikA. KaiA and CikA compete for binding to KaiB(fs), and KaiB(fs) and SasA compete for binding to KaiC, thus the clock oscillator and output signal pathway are tightly coupled. This is Circadian clock oscillator protein KaiB from Thermosynechococcus vestitus (strain NIES-2133 / IAM M-273 / BP-1).